The primary structure comprises 75 residues: Putative primary metabolism protein HVA1 (75 aa).

The segment covering 1–13 has biased composition (polar residues); the sequence is MSVQDKQGQNINV. 2 disordered regions span residues 1 to 24 and 40 to 75; these read MSVQ…YRGG and AAEK…DKQK.

Its function is as follows. May play a role in primary metabolism. The polypeptide is Putative primary metabolism protein HVA1 (Cryptococcus neoformans var. grubii serotype A (strain H99 / ATCC 208821 / CBS 10515 / FGSC 9487) (Filobasidiella neoformans var. grubii)).